The primary structure comprises 147 residues: Cytochrome c oxidase subunit 3 (147 aa).

A run of 4 helical transmembrane segments spans residues 13–33, 48–68, 83–103, and 125–145; these read FQIP…VTWA, GLFI…YEYF, FFMA…FLLI, and AWYW…IYWW.

This sequence belongs to the cytochrome c oxidase subunit 3 family. As to quaternary structure, component of the cytochrome c oxidase (complex IV, CIV), a multisubunit enzyme composed of a catalytic core of 3 subunits and several supernumerary subunits. The complex exists as a monomer or a dimer and forms supercomplexes (SCs) in the inner mitochondrial membrane with ubiquinol-cytochrome c oxidoreductase (cytochrome b-c1 complex, complex III, CIII).

The protein localises to the mitochondrion inner membrane. The enzyme catalyses 4 Fe(II)-[cytochrome c] + O2 + 8 H(+)(in) = 4 Fe(III)-[cytochrome c] + 2 H2O + 4 H(+)(out). Functionally, component of the cytochrome c oxidase, the last enzyme in the mitochondrial electron transport chain which drives oxidative phosphorylation. The respiratory chain contains 3 multisubunit complexes succinate dehydrogenase (complex II, CII), ubiquinol-cytochrome c oxidoreductase (cytochrome b-c1 complex, complex III, CIII) and cytochrome c oxidase (complex IV, CIV), that cooperate to transfer electrons derived from NADH and succinate to molecular oxygen, creating an electrochemical gradient over the inner membrane that drives transmembrane transport and the ATP synthase. Cytochrome c oxidase is the component of the respiratory chain that catalyzes the reduction of oxygen to water. Electrons originating from reduced cytochrome c in the intermembrane space (IMS) are transferred via the dinuclear copper A center (CU(A)) of subunit 2 and heme A of subunit 1 to the active site in subunit 1, a binuclear center (BNC) formed by heme A3 and copper B (CU(B)). The BNC reduces molecular oxygen to 2 water molecules using 4 electrons from cytochrome c in the IMS and 4 protons from the mitochondrial matrix. This Spodoptera frugiperda (Fall armyworm) protein is Cytochrome c oxidase subunit 3 (COIII).